We begin with the raw amino-acid sequence, 689 residues long: MSEKTFLVEIGTEELPPKALRSLAESFAANFTAELDNAGLAHGTVQWFAAPRRLALKVANLAEAQPDREIEKRGPAIAQAFDAEGKPSKAAEGWARGCGITVDQAERLTTDKGEWLLYRAHVKGESTEALLPNMVATSLAKLPIPKLMRWGASDVHFVRPVHTVTLLLGDKVIPATILGIQSDRVIRGHRFMGESEFTIDNADQYPEILRERGKVIADYEERKAKIKADAEEAARKIGGNADLSESLLEEVASLVEWPVVLTAKFEEKFLAVPSEALVYTMKGDQKYFPVYANDGKLLPNFIFVANIESKDPQQIISGNEKVVRPRLADAEFFFNTDRKKRLEDNLPRLQTVLFQQQLGTLRDKTDRIQALAGWIAEQIGADVNHATRAGLLSKCDLMTNMVFEFTDTQGVMGMHYARHDGEAEDVAVALNEQYQPRFAGDDLPSNPVACALAIADKMDTLAGIFGIGQHPKGDKDPFALRRAALGVLRIIVEKNLNLDLQTLTEEAVRLYGDKLTNANVVDDVIDFMLGRFRAWYQDEGYTVDTIQAVLARRPTRPADFDARMKAVSHFRTLDAAAALAAANKRVSNILAKSDEVLSDRVNASTLKEPEEIKLAMQVVVLRDKLEPYFAEGRYQDALVELAELREPVDAFFDKVMVMVDDKELRINRLTMLEKLRELFLRVADISLLQ.

Belongs to the class-II aminoacyl-tRNA synthetase family. Tetramer of two alpha and two beta subunits.

The protein resides in the cytoplasm. The catalysed reaction is tRNA(Gly) + glycine + ATP = glycyl-tRNA(Gly) + AMP + diphosphate. The sequence is that of Glycine--tRNA ligase beta subunit from Escherichia coli O7:K1 (strain IAI39 / ExPEC).